A 371-amino-acid chain; its full sequence is Leu/Ile/Val-binding protein homolog 2 (371 aa).

The signal sequence occupies residues 1 to 23 (MKKSLFCGVCLCALVAMGGTSFA).

The protein belongs to the leucine-binding protein family.

Component of an amino-acid transport system. The chain is Leu/Ile/Val-binding protein homolog 2 from Brucella abortus (strain 2308).